The sequence spans 1294 residues: Unconventional myosin-VI (1294 aa).

One can recognise a Myosin N-terminal SH3-like domain in the interval 2-53; the sequence is EDGKPVWAPHPTDGFQMGNIVDIGPDSLTIEPLNQKGKTFLALINQVFPAEE. One can recognise a Myosin motor domain in the interval 57 to 771; the sequence is KDVEDNCSLM…KFAEFDQIMK (715 aa). 151–158 is an ATP binding site; it reads GESGAGKT. Ser267 is subject to Phosphoserine. A responsible for slow ATPase activity region spans residues 273–317; it reads YLNRGCTRYFANKETDKQILQNRKSPEYLKAGSMKDPLLDDHGDF. Thr405 bears the Phosphothreonine mark. Ser604 bears the Phosphoserine mark. Residues 665–672 are actin-binding; the sequence is FIRCIKPN. Residues 782 to 810 form a required for binding calmodulin region; sequence KRVNHWLTCSRWKKVQWCSLSVIKLKNKI. The 21-residue stretch at 814–834 folds into the IQ domain; that stretch reads AEACIKMQKTIRMWLCKRRHK. Residues 835 to 916 are three-helix bundle; that stretch reads PRIDGLVKVG…EELLSALQKK (82 aa). The interval 917-984 is SAH; it reads KQQEEEAERL…EDDEKRIQAE (68 aa). Positions 934 to 955 are disordered; the sequence is EKERKRREEDEKRRRKEEEERR. Ser1025 carries the post-translational modification Phosphoserine. The tract at residues 1060–1285 is interaction with TAX1BP1 and CALCOCO2/NDP52; that stretch reads KEMSEFLSRG…ESRQARPTYA (226 aa). Residues 1116 to 1118 are interaction with OPTN; it reads RRL. Ser1155 carries the phosphoserine modification. The tract at residues 1157–1285 is interaction with TOM1; sequence QQNPAAQIPA…ESRQARPTYA (129 aa).

This sequence belongs to the TRAFAC class myosin-kinesin ATPase superfamily. Myosin family. In terms of assembly, homodimer; dimerization seems to implicate the unfolding of the three-helix bundle region creating an additional calmodulin binding site, and cargo binding. Able to function as a monomer under specific conditions in vitro. Forms a complex with CFTR and DAB2 in the apical membrane of epithelial cells. Component of the DISP/DOCK7-induced septin displacement complex, at least composed of DOCK7, LRCH3 and MYO6. Binding to calmodulin through a unique insert, not found in other myosins, located in the neck region between the motor domain and the IQ domain appears to contribute to the directionality reversal. This interaction occurs only if the C-terminal lobe of calmodulin is occupied by calcium. Interaction with F-actin/ACTN1 occurs only at the apical brush border domain of the proximal tubule cells. Interacts with DAB2. In vitro, the C-terminal globular tail binds a C-terminal region of DAB2. Interacts with CFTR. Interacts with CABP5. Interacts with TOM1. Interacts with OPTN. Interacts with TAX1BP1 and CALCOCO2/NDP52. Interacts with TOM1L2. Interacts with CLIC5; may work together in a complex which also includes RDX and MYO6 to stabilize linkages between the plasma membrane and subjacent actin cytoskeleton at the base of stereocilia. In terms of processing, phosphorylation in the motor domain, induced by EGF, results in translocation of MYO6 from the cell surface to membrane ruffles and affects F-actin dynamics. Phosphorylated in vitro by p21-activated kinase (PAK). In terms of tissue distribution, expressed in most tissues examined including heart, brain, placenta, pancreas, spleen, thymus, prostate, testis, ovary, small intestine and colon. Highest levels in brain, pancreas, testis and small intestine. Also expressed in fetal brain and cochlea. Isoform 1 and isoform 2, containing the small insert, and isoform 4, containing neither insert, are expressed in unpolarized epithelial cells.

It localises to the golgi apparatus. It is found in the trans-Golgi network membrane. The protein localises to the nucleus. Its subcellular location is the cytoplasm. The protein resides in the perinuclear region. It localises to the membrane. It is found in the clathrin-coated pit. The protein localises to the cytoplasmic vesicle. Its subcellular location is the clathrin-coated vesicle. The protein resides in the cell projection. It localises to the filopodium. It is found in the ruffle membrane. The protein localises to the microvillus. Its subcellular location is the cytosol. The protein resides in the autophagosome. It localises to the endosome. It is found in the clathrin-coated vesicle membrane. Functionally, myosins are actin-based motor molecules with ATPase activity. Unconventional myosins serve in intracellular movements. Myosin 6 is a reverse-direction motor protein that moves towards the minus-end of actin filaments. Has slow rate of actin-activated ADP release due to weak ATP binding. Functions in a variety of intracellular processes such as vesicular membrane trafficking and cell migration. Required for the structural integrity of the Golgi apparatus via the p53-dependent pro-survival pathway. Appears to be involved in a very early step of clathrin-mediated endocytosis in polarized epithelial cells. Together with TOM1, mediates delivery of endocytic cargo to autophagosomes thereby promoting autophagosome maturation and driving fusion with lysosomes. Links TOM1 with autophagy receptors, such as TAX1BP1; CALCOCO2/NDP52 and OPTN. May act as a regulator of F-actin dynamics. As part of the DISP complex, may regulate the association of septins with actin and thereby regulate the actin cytoskeleton. May play a role in transporting DAB2 from the plasma membrane to specific cellular targets. May play a role in the extension and network organization of neurites. Required for structural integrity of inner ear hair cells. Required for the correct localization of CLIC5 and RDX at the stereocilium base. Modulates RNA polymerase II-dependent transcription. This is Unconventional myosin-VI from Homo sapiens (Human).